An 87-amino-acid polypeptide reads, in one-letter code: UPF0250 protein KPN78578_06520 (87 aa).

This sequence belongs to the UPF0250 family.

This Klebsiella pneumoniae subsp. pneumoniae (strain ATCC 700721 / MGH 78578) protein is UPF0250 protein KPN78578_06520.